We begin with the raw amino-acid sequence, 416 residues long: Nucleoside transporter 1 (416 aa).

Positions methionine 1–glycine 26 are enriched in basic and acidic residues. The disordered stretch occupies residues methionine 1 to serine 28. At methionine 1–glutamine 35 the chain is on the cytoplasmic side. A helical transmembrane segment spans residues phenylalanine 36–glycine 58. The Extracellular portion of the chain corresponds to leucine 59–lysine 64. Residues tyrosine 65–valine 83 traverse the membrane as a helical segment. At lysine 84 to lysine 87 the chain is on the cytoplasmic side. Residues methionine 88–alanine 107 form a helical membrane-spanning segment. The Extracellular segment spans residues histidine 108 to tyrosine 119. A helical transmembrane segment spans residues cysteine 120–phenylalanine 139. Over serine 140–asparagine 148 the chain is Cytoplasmic. The chain crosses the membrane as a helical span at residues methionine 149 to leucine 171. Topologically, residues aspartate 172 to lysine 187 are extracellular. The helical transmembrane segment at leucine 188–leucine 210 threads the bilayer. Residues glutamate 211–lysine 241 are Cytoplasmic-facing. The helical transmembrane segment at alanine 242–glycine 261 threads the bilayer. Topologically, residues histidine 262–aspartate 273 are extracellular. Residues tyrosine 274–tyrosine 292 traverse the membrane as a helical segment. Residues proline 293–lysine 311 lie on the Cytoplasmic side of the membrane. A helical membrane pass occupies residues leucine 312–alanine 331. Residues cysteine 332 to glutamine 343 lie on the Extracellular side of the membrane. Residues cysteine 344–valine 366 form a helical membrane-spanning segment. Residues glutamine 367–threonine 380 are Cytoplasmic-facing. Residues isoleucine 381–tyrosine 403 form a helical membrane-spanning segment. Residues aspartate 404–proline 416 are Extracellular-facing.

This sequence belongs to the SLC29A/ENT transporter (TC 2.A.57) family.

Its subcellular location is the cell membrane. It catalyses the reaction inosine(in) = inosine(out). It carries out the reaction adenosine(in) = adenosine(out). The catalysed reaction is hypoxanthine(out) = hypoxanthine(in). The enzyme catalyses guanosine(in) = guanosine(out). It catalyses the reaction guanine(out) = guanine(in). It carries out the reaction thymidine(in) = thymidine(out). The catalysed reaction is uridine(out) = uridine(in). The enzyme catalyses uracil(in) = uracil(out). It catalyses the reaction thymine(out) = thymine(in). It carries out the reaction adenine(out) = adenine(in). The catalysed reaction is cytosine(out) = cytosine(in). The enzyme catalyses xanthine(out) = xanthine(in). Its function is as follows. Nucleoside and nucleobase transporter with a broad substrate specificity. The chain is Nucleoside transporter 1 from Plasmodium vivax (strain Salvador I).